The chain runs to 245 residues: 1-(5-phosphoribosyl)-5-[(5-phosphoribosylamino)methylideneamino] imidazole-4-carboxamide isomerase (245 aa).

Residue Asp-8 is the Proton acceptor of the active site. Asp-129 acts as the Proton donor in catalysis.

Belongs to the HisA/HisF family.

It is found in the cytoplasm. The enzyme catalyses 1-(5-phospho-beta-D-ribosyl)-5-[(5-phospho-beta-D-ribosylamino)methylideneamino]imidazole-4-carboxamide = 5-[(5-phospho-1-deoxy-D-ribulos-1-ylimino)methylamino]-1-(5-phospho-beta-D-ribosyl)imidazole-4-carboxamide. It participates in amino-acid biosynthesis; L-histidine biosynthesis; L-histidine from 5-phospho-alpha-D-ribose 1-diphosphate: step 4/9. This Pelobacter propionicus (strain DSM 2379 / NBRC 103807 / OttBd1) protein is 1-(5-phosphoribosyl)-5-[(5-phosphoribosylamino)methylideneamino] imidazole-4-carboxamide isomerase.